A 569-amino-acid chain; its full sequence is Proline--tRNA ligase (569 aa).

It belongs to the class-II aminoacyl-tRNA synthetase family. ProS type 1 subfamily. As to quaternary structure, homodimer.

The protein resides in the cytoplasm. It carries out the reaction tRNA(Pro) + L-proline + ATP = L-prolyl-tRNA(Pro) + AMP + diphosphate. Functionally, catalyzes the attachment of proline to tRNA(Pro) in a two-step reaction: proline is first activated by ATP to form Pro-AMP and then transferred to the acceptor end of tRNA(Pro). As ProRS can inadvertently accommodate and process non-cognate amino acids such as alanine and cysteine, to avoid such errors it has two additional distinct editing activities against alanine. One activity is designated as 'pretransfer' editing and involves the tRNA(Pro)-independent hydrolysis of activated Ala-AMP. The other activity is designated 'posttransfer' editing and involves deacylation of mischarged Ala-tRNA(Pro). The misacylated Cys-tRNA(Pro) is not edited by ProRS. This is Proline--tRNA ligase from Desulforamulus reducens (strain ATCC BAA-1160 / DSM 100696 / MI-1) (Desulfotomaculum reducens).